A 271-amino-acid polypeptide reads, in one-letter code: 2-amino-3,7-dideoxy-D-threo-hept-6-ulosonate synthase (271 aa).

Asp-33 acts as the Proton acceptor in catalysis. 1-deoxy-D-threo-hexo-2,5-diulose 6-phosphate-binding positions include 33-37 (DHGVS) and 153-155 (YPR). Tyr-153 functions as the Proton donor in the catalytic mechanism. Lys-184 serves as the catalytic Schiff-base intermediate with substrate. 1-deoxy-D-threo-hexo-2,5-diulose 6-phosphate is bound by residues 209-210 (GG) and 236-237 (GR).

It belongs to the DeoC/FbaB aldolase family. ADHS subfamily. As to quaternary structure, homodecamer.

It carries out the reaction 1-deoxy-D-threo-hexo-2,5-diulose 6-phosphate + L-aspartate 4-semialdehyde = 2,3-dioxopropyl phosphate + 2-amino-2,3,7-trideoxy-D-lyxo-hept-6-ulosonate. In terms of biological role, catalyzes a transaldol reaction between 6-deoxy-5-ketofructose 1-phosphate (DKFP) and L-aspartate semialdehyde (ASA) with an elimination of hydroxypyruvaldehyde phosphate to yield 2-amino-3,7-dideoxy-D-threo-hept-6-ulosonate (ADH). Plays a key role in an alternative pathway of the biosynthesis of 3-dehydroquinate (DHQ), which is involved in the canonical pathway for the biosynthesis of aromatic amino acids. The chain is 2-amino-3,7-dideoxy-D-threo-hept-6-ulosonate synthase from Methanococcus aeolicus (strain ATCC BAA-1280 / DSM 17508 / OCM 812 / Nankai-3).